The following is a 467-amino-acid chain: Cysteine--tRNA ligase (467 aa).

Cys-29 provides a ligand contact to Zn(2+). The short motif at 31 to 41 (ATVQGEPHIGH) is the 'HIGH' region element. Residues Cys-207, His-232, and Glu-236 each contribute to the Zn(2+) site. Positions 263–267 (KMSKS) match the 'KMSKS' region motif. Lys-266 contributes to the ATP binding site. The segment at 446 to 467 (IDVTDTPNGPEWSLRTARGKAN) is disordered.

The protein belongs to the class-I aminoacyl-tRNA synthetase family. Monomer. The cofactor is Zn(2+).

Its subcellular location is the cytoplasm. It catalyses the reaction tRNA(Cys) + L-cysteine + ATP = L-cysteinyl-tRNA(Cys) + AMP + diphosphate. This Nocardia farcinica (strain IFM 10152) protein is Cysteine--tRNA ligase.